We begin with the raw amino-acid sequence, 446 residues long: Tubulin beta chain (446 aa).

Gln-11, Glu-69, Ser-138, Gly-142, Thr-143, Gly-144, Asn-204, and Asn-226 together coordinate GTP. Position 69 (Glu-69) interacts with Mg(2+). A disordered region spans residues 427-446 (EAGVDEGEEFEEEEDFGDEQ). Positions 429–446 (GVDEGEEFEEEEDFGDEQ) are enriched in acidic residues.

This sequence belongs to the tubulin family. In terms of assembly, dimer of alpha and beta chains. A typical microtubule is a hollow water-filled tube with an outer diameter of 25 nm and an inner diameter of 15 nM. Alpha-beta heterodimers associate head-to-tail to form protofilaments running lengthwise along the microtubule wall with the beta-tubulin subunit facing the microtubule plus end conferring a structural polarity. Microtubules usually have 13 protofilaments but different protofilament numbers can be found in some organisms and specialized cells. It depends on Mg(2+) as a cofactor.

The protein resides in the cytoplasm. It is found in the cytoskeleton. In terms of biological role, tubulin is the major constituent of microtubules, a cylinder consisting of laterally associated linear protofilaments composed of alpha- and beta-tubulin heterodimers. Microtubules grow by the addition of GTP-tubulin dimers to the microtubule end, where a stabilizing cap forms. Below the cap, tubulin dimers are in GDP-bound state, owing to GTPase activity of alpha-tubulin. The sequence is that of Tubulin beta chain from Giardia intestinalis (Giardia lamblia).